Here is a 338-residue protein sequence, read N- to C-terminus: Short-chain dehydrogenase/reductase phmF (338 aa).

Residues Leu-46, Arg-71, Asp-96, and Asn-123 each contribute to the NADP(+) site. The Proton donor role is filled by Ser-177. Residues Tyr-211 and Lys-215 each coordinate NADP(+). Catalysis depends on Tyr-211, which acts as the Proton acceptor. The active-site Lowers pKa of active site Tyr is the Lys-215.

Belongs to the short-chain dehydrogenases/reductases (SDR) family.

Its pathway is mycotoxin biosynthesis. Its function is as follows. Short-chain dehydrogenase/reductase; part of the gene cluster that mediates the biosynthesis of the mycotoxins phomacins, leucine-derived cytochalasans with potent actin polymerization-inhibitory activities and monocot-specific antigerminative activities. The first step in the pathway is catalyzed by the hybrid PKS-NRPS phmA, assisted by the enoyl reductase phmE, that are responsible for fusion of the leucine precursor and the polyketide backbone to produce a 2-pyrrolidone intermediate. The polyketide synthase module (PKS) of phmA is responsible for the synthesis of the polyketide backbone and the downstream nonribosomal peptide synthetase (NRPS) amidates the carboxyl end of the polyketide with the leucine precursor. Because phmA lacks a designated enoylreductase (ER) domain, the required activity is provided the enoyl reductase phmE. Reduction by the hydrolyase phmG, followed by dehydration and intra-molecular Diels-Alder cyclization by the Diels-Alderase phmD then yield the required isoindolone-fused macrocycle. A number of oxidative steps catalyzed by the tailoring cytochrome P450 monooxygenase phmB, the FAD-linked oxidoreductase phmC and the short-chain dehydrogenase/reductase phmF, are further required to afford the final products, phomacin D and phomacin E. The protein is Short-chain dehydrogenase/reductase phmF of Phaeosphaeria nodorum (strain SN15 / ATCC MYA-4574 / FGSC 10173) (Glume blotch fungus).